We begin with the raw amino-acid sequence, 205 residues long: Small ribosomal subunit protein uS4c (205 aa).

A disordered region spans residues 16–40 (GKLPSLTNKTSKKRKSPGQPATSFK). An S4 RNA-binding domain is found at 93-161 (MRLDNIVHRI…IQKNIESKEL (69 aa)).

The protein belongs to the universal ribosomal protein uS4 family. In terms of assembly, part of the 30S ribosomal subunit. Contacts protein S5. The interaction surface between S4 and S5 is involved in control of translational fidelity.

It localises to the plastid. It is found in the chloroplast. Functionally, one of the primary rRNA binding proteins, it binds directly to 16S rRNA where it nucleates assembly of the body of the 30S subunit. With S5 and S12 plays an important role in translational accuracy. In Euglena gracilis, this protein is Small ribosomal subunit protein uS4c (rps4).